The primary structure comprises 1596 residues: Transcription factor Zelda (1596 aa).

3 disordered regions span residues 1–143 (MTSI…QQQQ), 209–273 (SGLG…GGAA), and 490–530 (TSPA…SVLP). Over residues 13 to 24 (AAEALASSSATD) the composition is skewed to low complexity. Gly residues predominate over residues 25–53 (SGGGGAGGGGGGGGGGSGGPGAGGTGGVG). Residues 60-72 (NATISAAADSSDN) are compositionally biased toward polar residues. Composition is skewed to low complexity over residues 73–123 (QPGT…ITHQ) and 226–267 (SAPS…QTPG). Residues 501–518 (GGPGQEGAAGAAPGGGYR) show a composition bias toward gly residues. The segment at 552–576 (YNCTACNKWFTSSGHLKRHYNTTLH) adopts a C2H2-type 1 zinc-finger fold. Disordered stretches follow at residues 578–813 (NAVK…TTTA), 825–945 (EDSN…MGML), 1017–1074 (GEQH…MPLT), and 1252–1322 (QMQH…TTLP). Over residues 610–634 (RGNAAAAAAAAAAAASASGQGQQQQ) the composition is skewed to low complexity. Positions 635 to 653 (PPIPPPPANVPPPEPPRSP) are enriched in pro residues. Positions 656–668 (YGGGGGLGVGAMG) are enriched in gly residues. Over residues 673 to 682 (SQYSASPSPT) the composition is skewed to polar residues. 2 stretches are compositionally biased toward low complexity: residues 683–709 (QQQQ…GYGY) and 719–753 (NASP…HHNS). Polar residues predominate over residues 768–781 (PHNNNTTQMPSSQM). Residues 796–813 (TTTRAPQITTTATTTTTA) are compositionally biased toward low complexity. The segment covering 830 to 840 (THTHTHTHPNH) has biased composition (basic residues). Residues 849–858 (SSSSSSSMAT) show a composition bias toward low complexity. Residues 864–877 (QELRDQEQADDHLH) are compositionally biased toward basic and acidic residues. The span at 879–916 (HQQASQQYLLSARHYHSSTPNTLSSSNTNPSTPSSNSP) shows a compositional bias: low complexity. Positions 904 to 1297 (SNTNPSTPSS…PLAKKRRGGN (394 aa)) are transactivation activation domain (TAD). Residues 921–932 (RQEQQGTDFSRT) are compositionally biased toward polar residues. Positions 933–944 (TPPPQPLPPMGM) are enriched in pro residues. Residues 1019-1036 (QHQRQEADHHQQQRELHQ) are compositionally biased toward basic and acidic residues. Composition is skewed to low complexity over residues 1037-1062 (LDQQ…SPTS) and 1252-1275 (QMQH…QQQQ). 2 stretches are compositionally biased toward polar residues: residues 1276–1286 (ILADQTQTMAQ) and 1309–1322 (SSVG…TTLP). Residues 1326–1349 (IKCLECDKEFTKNCYLTQHNKSFH) form a C2H2-type 2 zinc finger. A C2H2-type 3; degenerate zinc finger spans residues 1355-1378 (FRCQKCGKRFQSEDVYTTHLGRHR). C2H2-type zinc fingers lie at residues 1384–1407 (HKCE…EAIH) and 1413–1435 (HMCD…LETH).

Zygotically expressed in the developing embryonic germ layers, nervous system, imaginal disk primordia and in larval wing and eye disks. In terms of tissue distribution, detected in the germline cells of the ovary, in unfertilized eggs and throughout early development. Later, it becomes mostly restricted to the nervous system and specific head regions. Also expressed in imaginal wing disks in third instar larvae.

Its subcellular location is the nucleus. It localises to the chromosome. Functionally, transcription factor required for zygotic genome activation (ZGA), a critical event in early embryonic development during which the developmental control passes from maternally provided mRNAs to the expression of the zygotic genome after fertilization. Binds to regulatory DNA sequences containing a 5'-CAGGTAG-3' sequence motif, which are highly enriched among developmental enhancers. Within 1 hour into development, or by the embryo's 8th nuclear cycle, binds the majority of its motifs genome-wide. Zelda-binding promotes nucleosome depletion and chromatin accessibility, thereby facilitating the binding of patterning transcription factors, including the binding of the dorsoventral patterning transcription factors dorsal (dl) and twist (twi), and the anteroposterior patterning transcription factors bicoid (bcd) and caudal (cad). Promotes the activity of patterning transcription factors, such as bcd and dl, by lowering the concentration threshold required for transcriptional activation. Required both for the earliest (minor) and major waves of transcription during ZGA. Also involved in maternal mRNA clearance during the maternal-to-zygote transition by promoting expression of microRNAs (miRNAs), such as miR-1, miR-9a and miR-309, which mediate degradation of maternally-loaded RNAs. Also involved in post-blastoderm development: nvolved in nervous system development by maintaining neuroblasts in an undifferentiated state and equired for wing disk development. Its function is as follows. Constitutes the main isoform expressed throughout development. Transcription factor required for zygotic genome activation (ZGA). Acts as a dominant negative inhibitor of transcription factor activity of isoform A. The chain is Transcription factor Zelda from Drosophila melanogaster (Fruit fly).